We begin with the raw amino-acid sequence, 404 residues long: Deoxyguanosinetriphosphate triphosphohydrolase-like protein (404 aa).

The interval 1 to 33 (MSVGMAAPRAAYGCDPDRSRGRQFAEPPSNNRS) is disordered. In terms of domain architecture, HD spans 69–217 (RLTHSLEVAQ…AAIADDIAYD (149 aa)).

It belongs to the dGTPase family. Type 2 subfamily.

The protein is Deoxyguanosinetriphosphate triphosphohydrolase-like protein of Rhodopseudomonas palustris (strain BisB5).